The primary structure comprises 104 residues: Holotricin-3 (104 aa).

The signal sequence occupies residues 1–20; sequence MNKLIILGLACIIAVASAMP. Positions 22–104 are disordered; that stretch reads GPGDGHGGGH…HHGGYQTHGY (83 aa). Residues 23-97 show a composition bias toward gly residues; the sequence is PGDGHGGGHG…PGGHGGGHHG (75 aa). 18 repeat units span residues 27–30, 31–34, 35–38, 39–42, 43–46, 47–50, 51–54, 55–58, 59–62, 63–66, 67–70, 71–74, 75–78, 79–82, 83–86, 87–90, 91–94, and 96–98. The segment at 27–98 is 18 X 4 AA approximate tandem repeats of H-G-G-G; it reads HGGGHGGGHG…GGHGGGHHGG (72 aa).

To T.molitor tenecin 3.

Its subcellular location is the secreted. Its function is as follows. Has antifungal activity against C.albicans. The protein is Holotricin-3 of Holotrichia diomphalia (Korean black chafer).